The primary structure comprises 205 residues: Large ribosomal subunit protein uL3 (205 aa).

This sequence belongs to the universal ribosomal protein uL3 family. As to quaternary structure, part of the 50S ribosomal subunit. Forms a cluster with proteins L14 and L19.

In terms of biological role, one of the primary rRNA binding proteins, it binds directly near the 3'-end of the 23S rRNA, where it nucleates assembly of the 50S subunit. The chain is Large ribosomal subunit protein uL3 from Flavobacterium johnsoniae (strain ATCC 17061 / DSM 2064 / JCM 8514 / BCRC 14874 / CCUG 350202 / NBRC 14942 / NCIMB 11054 / UW101) (Cytophaga johnsonae).